Here is a 208-residue protein sequence, read N- to C-terminus: Uracil phosphoribosyltransferase (208 aa).

5-phospho-alpha-D-ribose 1-diphosphate is bound by residues R78, R103, and 130–138 (DPMLATGGS). Uracil is bound by residues I193 and 198-200 (GDA). D199 lines the 5-phospho-alpha-D-ribose 1-diphosphate pocket.

Belongs to the UPRTase family. Requires Mg(2+) as cofactor.

It carries out the reaction UMP + diphosphate = 5-phospho-alpha-D-ribose 1-diphosphate + uracil. It participates in pyrimidine metabolism; UMP biosynthesis via salvage pathway; UMP from uracil: step 1/1. Allosterically activated by GTP. Catalyzes the conversion of uracil and 5-phospho-alpha-D-ribose 1-diphosphate (PRPP) to UMP and diphosphate. The polypeptide is Uracil phosphoribosyltransferase (Histophilus somni (strain 129Pt) (Haemophilus somnus)).